A 718-amino-acid chain; its full sequence is SANT and BTB domain regulator of class switch recombination (718 aa).

Positions 21 to 59 (DMILYPLIGIPQTINWETVARLVPGLTPKECVKRFDELK) constitute an SANT domain. Residues 147 to 255 (MVIHVCDEAK…QCIQYCHKNM (109 aa)) enclose the BTB domain. The segment covering 555 to 576 (SEEEEYTTGSEVTEDEVGDEEE) has biased composition (acidic residues). 2 disordered regions span residues 555 to 622 (SEEE…SPFV) and 690 to 718 (RASVPVTARQNSSDKNQRSKSRFGQGRPA). Positions 580–595 (KQRKKEKPKKFTKPPK) are enriched in basic residues. The span at 604–615 (QKKEKTLEKSTS) shows a compositional bias: basic and acidic residues.

It belongs to the KIAA1841 family. Homodimer. Interacts (via the BTB domain) with HDAC1 and NCOR2.

Negatively regulates class switch recombination or isotype switching in splenic B-cells. The polypeptide is SANT and BTB domain regulator of class switch recombination (Mus musculus (Mouse)).